A 37-amino-acid chain; its full sequence is Large ribosomal subunit protein bL36 (37 aa).

It belongs to the bacterial ribosomal protein bL36 family.

This Aromatoleum aromaticum (strain DSM 19018 / LMG 30748 / EbN1) (Azoarcus sp. (strain EbN1)) protein is Large ribosomal subunit protein bL36.